The sequence spans 61 residues: UPF0434 protein Pfl01_4174 (61 aa).

This sequence belongs to the UPF0434 family.

The polypeptide is UPF0434 protein Pfl01_4174 (Pseudomonas fluorescens (strain Pf0-1)).